Reading from the N-terminus, the 313-residue chain is Ribosomal protein L11 methyltransferase (313 aa).

S-adenosyl-L-methionine-binding residues include threonine 161, glycine 182, aspartate 204, and asparagine 247.

This sequence belongs to the methyltransferase superfamily. PrmA family.

Its subcellular location is the cytoplasm. The enzyme catalyses L-lysyl-[protein] + 3 S-adenosyl-L-methionine = N(6),N(6),N(6)-trimethyl-L-lysyl-[protein] + 3 S-adenosyl-L-homocysteine + 3 H(+). Its function is as follows. Methylates ribosomal protein L11. The chain is Ribosomal protein L11 methyltransferase from Halalkalibacterium halodurans (strain ATCC BAA-125 / DSM 18197 / FERM 7344 / JCM 9153 / C-125) (Bacillus halodurans).